The sequence spans 432 residues: Elongation factor 1-gamma (432 aa).

The GST N-terminal domain maps to 1 to 82 (LYTYPENWRA…YVSNEELRGS (82 aa)). In terms of domain architecture, GST C-terminal spans 83–211 (TPEAAAQVVQ…VKLCEKMAQF (129 aa)). An N6-acetyllysine mark is found at K142 and K207. Over residues 216–249 (FAESQPKKDTPRKEKGSREEKQKPQAERKEEKKA) the composition is skewed to basic and acidic residues. The disordered stretch occupies residues 216–258 (FAESQPKKDTPRKEKGSREEKQKPQAERKEEKKAAAPAPEEEL). K248 participates in a covalent cross-link: Glycyl lysine isopeptide (Lys-Gly) (interchain with G-Cter in SUMO1). The 162-residue stretch at 271 to 432 (AKDPFAHLPK…KAFNQGKIFK (162 aa)) folds into the EF-1-gamma C-terminal domain. K280 is covalently cross-linked (Glycyl lysine isopeptide (Lys-Gly) (interchain with G-Cter in SUMO2)). The residue at position 396 (K396) is an N6-acetyllysine. N6-acetyllysine; alternate is present on K429. K429 is modified (N6-malonyllysine; alternate).

As to quaternary structure, EF-1 is composed of four subunits: alpha, beta, delta, and gamma.

Its function is as follows. Probably plays a role in anchoring the complex to other cellular components. This Sus scrofa (Pig) protein is Elongation factor 1-gamma (EEF1G).